Consider the following 195-residue polypeptide: Rubrerythrin (195 aa).

The region spanning 1–150 is the Ferritin-like diiron domain; that stretch reads MKSLKGTKTA…KLAKNIEEGK (150 aa). The Fe(3+) site is built by E20, E53, E98, E101, E132, H135, C162, C165, C178, and C181. The 39-residue stretch at 157–195 folds into the Rubredoxin-like domain; sequence VVLWKCGNCGFIWEGAEAPLKCPACLHPQAYFEVFKETY.

As to quaternary structure, homodimer. Possesses two rubredoxin-like centers and two non-sulfur oxo-bridged di-iron centers per dimer. It depends on Fe(3+) as a cofactor.

It localises to the cytoplasm. In terms of biological role, may provide oxidative stress protection via catalytic reduction of intracellular hydrogen peroxide. This Clostridium perfringens (strain 13 / Type A) protein is Rubrerythrin (rbr).